The chain runs to 758 residues: 5-methyltetrahydropteroyltriglutamate--homocysteine methyltransferase (758 aa).

5-methyltetrahydropteroyltri-L-glutamate contacts are provided by residues 16–19 (RELK) and Lys-117. Residues 436-438 (IGS) and Glu-489 each bind L-homocysteine. L-methionine contacts are provided by residues 436–438 (IGS) and Glu-489. Residues 520 to 521 (RC) and Trp-566 contribute to the 5-methyltetrahydropteroyltri-L-glutamate site. Asp-604 lines the L-homocysteine pocket. Asp-604 provides a ligand contact to L-methionine. Glu-610 contributes to the 5-methyltetrahydropteroyltri-L-glutamate binding site. Residues His-646, Cys-648, and Glu-670 each contribute to the Zn(2+) site. Catalysis depends on His-699, which acts as the Proton donor. Residue Cys-731 participates in Zn(2+) binding.

The protein belongs to the vitamin-B12 independent methionine synthase family. It depends on Zn(2+) as a cofactor.

The enzyme catalyses 5-methyltetrahydropteroyltri-L-glutamate + L-homocysteine = tetrahydropteroyltri-L-glutamate + L-methionine. It participates in amino-acid biosynthesis; L-methionine biosynthesis via de novo pathway; L-methionine from L-homocysteine (MetE route): step 1/1. Catalyzes the transfer of a methyl group from 5-methyltetrahydrofolate to homocysteine resulting in methionine formation. This is 5-methyltetrahydropteroyltriglutamate--homocysteine methyltransferase from Ruthia magnifica subsp. Calyptogena magnifica.